An 802-amino-acid polypeptide reads, in one-letter code: Threonine--tRNA ligase 2, cytoplasmic (802 aa).

Ala-2 carries the post-translational modification N-acetylalanine. Coiled-coil stretches lie at residues 3 to 23 (AEALAAEAVASRLERQEEDIR) and 76 to 96 (AEERSRQATLESAELEAAQEA). Low complexity predominate over residues 86–98 (ESAELEAAQEAGA). Positions 86 to 123 (ESAELEAAQEAGAQPPPSQSQDKDMKKKKMKESEADSE) are disordered. The span at 106-123 (QDKDMKKKKMKESEADSE) shows a compositional bias: basic and acidic residues. In terms of domain architecture, TGS spans 157–222 (DTSNIITVRV…EGDSSLELLT (66 aa)). At Ser-453 the chain carries Phosphoserine. A Nuclear localization signal motif is present at residues 786 to 792 (KLKNLRK).

The protein belongs to the class-II aminoacyl-tRNA synthetase family. In terms of assembly, may be a component of the multisynthetase complex (MSC), a large multi-subunit complex which contains at least eight different aminoacyl-tRNA synthetases plus three auxillary subunits AIMP1, AIMP2 and EEF1E1. Interacts with the MSC components EPRS1, AIMP1, AIMP2 and KARS1.

The protein resides in the cytoplasm. It localises to the nucleus. The enzyme catalyses tRNA(Thr) + L-threonine + ATP = L-threonyl-tRNA(Thr) + AMP + diphosphate + H(+). Functionally, catalyzes the attachment of threonine to tRNA(Thr) in a two-step reaction: threonine is first activated by ATP to form Thr-AMP and then transferred to the acceptor end of tRNA(Thr). Also edits incorrectly charged tRNA(Thr) via its editing domain, at the post-transfer stage. This is Threonine--tRNA ligase 2, cytoplasmic from Homo sapiens (Human).